The chain runs to 382 residues: ATP phosphoribosyltransferase regulatory subunit (382 aa).

This sequence belongs to the class-II aminoacyl-tRNA synthetase family. HisZ subfamily. As to quaternary structure, heteromultimer composed of HisG and HisZ subunits.

Its subcellular location is the cytoplasm. It functions in the pathway amino-acid biosynthesis; L-histidine biosynthesis; L-histidine from 5-phospho-alpha-D-ribose 1-diphosphate: step 1/9. Functionally, required for the first step of histidine biosynthesis. May allow the feedback regulation of ATP phosphoribosyltransferase activity by histidine. The polypeptide is ATP phosphoribosyltransferase regulatory subunit (Albidiferax ferrireducens (strain ATCC BAA-621 / DSM 15236 / T118) (Rhodoferax ferrireducens)).